The following is a 435-amino-acid chain: Trigger factor (435 aa).

The PPIase FKBP-type domain occupies 163–248; the sequence is GDFVTFDFKG…IKEIKVKELP (86 aa).

This sequence belongs to the FKBP-type PPIase family. Tig subfamily.

The protein resides in the cytoplasm. It carries out the reaction [protein]-peptidylproline (omega=180) = [protein]-peptidylproline (omega=0). In terms of biological role, involved in protein export. Acts as a chaperone by maintaining the newly synthesized protein in an open conformation. Functions as a peptidyl-prolyl cis-trans isomerase. The polypeptide is Trigger factor (Citrifermentans bemidjiense (strain ATCC BAA-1014 / DSM 16622 / JCM 12645 / Bem) (Geobacter bemidjiensis)).